The following is a 311-amino-acid chain: Heme A synthase (311 aa).

Topologically, residues 1–6 (MQRFIK) are cytoplasmic. A helical transmembrane segment spans residues 7 to 27 (WLAVITSLDLLVVLLGGALVT). At 28–62 (KTGSGQGCGKSWPLCNGEFVPSNLSMETIIELSHR) the chain is on the extracellular side. Cysteines 35 and 42 form a disulfide. E58 is a catalytic residue. A heme o-binding site is contributed by H61. A helical membrane pass occupies residues 63-83 (LTSGSAGILVTLLCILSWKYY). The Cytoplasmic segment spans residues 84–91 (KHVRETKT). The chain crosses the membrane as a helical span at residues 92–112 (LAILSFVFLVAQALMGAAAVV). Over 113–121 (WGQMPAVLA) the chain is Extracellular. A helical membrane pass occupies residues 122 to 142 (IHFGISLISFASVILLTCLIF). H123 contributes to the heme o binding site. Over 143 to 159 (EIDQKFDARSLIMDKKM) the chain is Cytoplasmic. Residues 160 to 180 (KFHIYGVTIYSYIVVYTGALV) form a helical membrane-spanning segment. The Extracellular portion of the chain corresponds to 181–211 (RHERATLACPDFPLCSKSRPMPTQLHEWVQM). A disulfide bond links C189 and C195. The helical transmembrane segment at 212–232 (GHRVAAMLIFAWILYAMIIAI) threads the bilayer. A heme b-binding site is contributed by H213. The Cytoplasmic segment spans residues 233-243 (RHYKQQRVVYW). A helical transmembrane segment spans residues 244 to 264 (GWIISFILVTLQAIVGILVVF). Topologically, residues 265 to 271 (TNASLAM) are extracellular. Residues 272 to 292 (ALLHSLFISCLFAVLCYLVMI) form a helical membrane-spanning segment. Residue H275 coordinates heme b. At 293 to 311 (GTRSTVNAKETESTSKQTK) the chain is on the cytoplasmic side.

Belongs to the COX15/CtaA family. Type 1 subfamily. In terms of assembly, interacts with CtaB. Requires heme b as cofactor.

The protein localises to the cell membrane. The catalysed reaction is Fe(II)-heme o + 2 A + H2O = Fe(II)-heme a + 2 AH2. It participates in porphyrin-containing compound metabolism; heme A biosynthesis; heme A from heme O: step 1/1. Its function is as follows. Catalyzes the conversion of heme O to heme A by two successive hydroxylations of the methyl group at C8. The first hydroxylation forms heme I, the second hydroxylation results in an unstable dihydroxymethyl group, which spontaneously dehydrates, resulting in the formyl group of heme A. This chain is Heme A synthase, found in Bacillus mycoides (strain KBAB4) (Bacillus weihenstephanensis).